The chain runs to 497 residues: Cytochrome P450 71A18 (497 aa).

The helical transmembrane segment at Thr-4 to Leu-24 threads the bilayer. Cys-439 serves as a coordination point for heme.

The protein belongs to the cytochrome P450 family. Requires heme as cofactor.

It localises to the membrane. The chain is Cytochrome P450 71A18 (CYP71A18) from Arabidopsis thaliana (Mouse-ear cress).